A 403-amino-acid polypeptide reads, in one-letter code: Zinc metalloproteinase nas-8 (403 aa).

The N-terminal stretch at 1–29 (MRRNDLLNNKITIFLSSLSLFVIIIPIYA) is a signal peptide. A propeptide spanning residues 30–111 (AEKDLLPPST…DPKNSESLRR (82 aa)) is cleaved from the precursor. A Peptidase M12A domain is found at 112 to 307 (NGVITGTRKW…LKMNLMYQCS (196 aa)). Intrachain disulfides connect cysteine 154–cysteine 306, cysteine 176–cysteine 195, cysteine 338–cysteine 372, cysteine 345–cysteine 365, and cysteine 352–cysteine 369. Histidine 203 is a Zn(2+) binding site. Glutamate 204 is an active-site residue. Zn(2+)-binding residues include histidine 207 and histidine 213. Residues 338 to 372 (CRDRTNLCWRWIDRCKSFFFEQIMKEFCSLSCGYC) form the ShKT domain. The N-linked (GlcNAc...) asparagine glycan is linked to asparagine 386.

Zn(2+) serves as cofactor.

The protein localises to the secreted. The enzyme catalyses Hydrolysis of peptide bonds in substrates containing five or more amino acids, preferentially with Ala in P1', and Pro in P2'.. In terms of biological role, metalloprotease. This chain is Zinc metalloproteinase nas-8 (nas-8), found in Caenorhabditis elegans.